The following is a 138-amino-acid chain: Translation initiation factor 5A (138 aa).

Residue Lys37 is modified to Hypusine.

The protein belongs to the eIF-5A family.

Its subcellular location is the cytoplasm. In terms of biological role, functions by promoting the formation of the first peptide bond. The sequence is that of Translation initiation factor 5A (eif5a) from Pyrococcus horikoshii (strain ATCC 700860 / DSM 12428 / JCM 9974 / NBRC 100139 / OT-3).